The chain runs to 285 residues: Dermonecrotic toxin LlSicTox-alphaIII1ii (285 aa).

His12 is an active-site residue. Residues Glu32 and Asp34 each contribute to the Mg(2+) site. His47 functions as the Nucleophile in the catalytic mechanism. Cys51 and Cys57 are disulfide-bonded. Residue Asp91 coordinates Mg(2+).

It belongs to the arthropod phospholipase D family. Class I subfamily. Mg(2+) serves as cofactor. Expressed by the venom gland.

It localises to the secreted. The catalysed reaction is an N-(acyl)-sphingosylphosphocholine = an N-(acyl)-sphingosyl-1,3-cyclic phosphate + choline. It carries out the reaction an N-(acyl)-sphingosylphosphoethanolamine = an N-(acyl)-sphingosyl-1,3-cyclic phosphate + ethanolamine. The enzyme catalyses a 1-acyl-sn-glycero-3-phosphocholine = a 1-acyl-sn-glycero-2,3-cyclic phosphate + choline. It catalyses the reaction a 1-acyl-sn-glycero-3-phosphoethanolamine = a 1-acyl-sn-glycero-2,3-cyclic phosphate + ethanolamine. Its function is as follows. Dermonecrotic toxins cleave the phosphodiester linkage between the phosphate and headgroup of certain phospholipids (sphingolipid and lysolipid substrates), forming an alcohol (often choline) and a cyclic phosphate. This toxin acts on sphingomyelin (SM) with high activity (56.8 U/mg). It may also act on ceramide phosphoethanolamine (CPE), lysophosphatidylcholine (LPC) and lysophosphatidylethanolamine (LPE), but not on lysophosphatidylserine (LPS), and lysophosphatidylglycerol (LPG). It acts by transphosphatidylation, releasing exclusively cyclic phosphate products as second products. Induces dermonecrosis, hemolysis, increased vascular permeability, edema, inflammatory response, and platelet aggregation. Is lethal to mice. This is Dermonecrotic toxin LlSicTox-alphaIII1ii from Loxosceles laeta (South American recluse spider).